Reading from the N-terminus, the 201-residue chain is FMN-dependent NADH:quinone oxidoreductase (201 aa).

Residues serine 10, 16–18 (SQS), 96–99 (MYNF), and 140–143 (SRGG) each bind FMN.

The protein belongs to the azoreductase type 1 family. Homodimer. It depends on FMN as a cofactor.

The enzyme catalyses 2 a quinone + NADH + H(+) = 2 a 1,4-benzosemiquinone + NAD(+). It catalyses the reaction N,N-dimethyl-1,4-phenylenediamine + anthranilate + 2 NAD(+) = 2-(4-dimethylaminophenyl)diazenylbenzoate + 2 NADH + 2 H(+). Quinone reductase that provides resistance to thiol-specific stress caused by electrophilic quinones. In terms of biological role, also exhibits azoreductase activity. Catalyzes the reductive cleavage of the azo bond in aromatic azo compounds to the corresponding amines. The sequence is that of FMN-dependent NADH:quinone oxidoreductase from Escherichia coli O9:H4 (strain HS).